A 305-amino-acid polypeptide reads, in one-letter code: Glutaminase (305 aa).

Substrate-binding residues include serine 61, asparagine 113, glutamate 158, asparagine 165, tyrosine 189, tyrosine 241, and valine 259.

It belongs to the glutaminase family. In terms of assembly, homotetramer.

It carries out the reaction L-glutamine + H2O = L-glutamate + NH4(+). The polypeptide is Glutaminase (Alkaliphilus oremlandii (strain OhILAs) (Clostridium oremlandii (strain OhILAs))).